Consider the following 101-residue polypeptide: uncharacterized protein (101 aa).

Its function is as follows. May regulate the expression of phage structural components with protein P13. This is an uncharacterized protein from Pseudoalteromonas phage PM2 (Bacteriophage PM2).